We begin with the raw amino-acid sequence, 157 residues long: NADPH-dependent 7-cyano-7-deazaguanine reductase (157 aa).

Cysteine 55 acts as the Thioimide intermediate in catalysis. Aspartate 62 (proton donor) is an active-site residue. Residues 77–79 and 96–97 contribute to the substrate site; these read VES and HE.

The protein belongs to the GTP cyclohydrolase I family. QueF type 1 subfamily.

The protein resides in the cytoplasm. It carries out the reaction 7-aminomethyl-7-carbaguanine + 2 NADP(+) = 7-cyano-7-deazaguanine + 2 NADPH + 3 H(+). It functions in the pathway tRNA modification; tRNA-queuosine biosynthesis. In terms of biological role, catalyzes the NADPH-dependent reduction of 7-cyano-7-deazaguanine (preQ0) to 7-aminomethyl-7-deazaguanine (preQ1). This chain is NADPH-dependent 7-cyano-7-deazaguanine reductase, found in Neisseria meningitidis serogroup C / serotype 2a (strain ATCC 700532 / DSM 15464 / FAM18).